A 305-amino-acid chain; its full sequence is Glycine--tRNA ligase alpha subunit (305 aa).

Belongs to the class-II aminoacyl-tRNA synthetase family. Tetramer of two alpha and two beta subunits.

The protein localises to the cytoplasm. It carries out the reaction tRNA(Gly) + glycine + ATP = glycyl-tRNA(Gly) + AMP + diphosphate. This is Glycine--tRNA ligase alpha subunit (glyQ) from Vibrio cholerae serotype O1 (strain ATCC 39315 / El Tor Inaba N16961).